The sequence spans 490 residues: Tryptophan 5-hydroxylase 2 (490 aa).

Serine 19 carries the phosphoserine modification. The span at 31–42 shows a compositional bias: polar residues; sequence LGSSTLNKPNSG. Positions 31-58 are disordered; it reads LGSSTLNKPNSGKNDDKGNKGSSKREAA. The segment covering 43-58 has biased composition (basic and acidic residues); it reads KNDDKGNKGSSKREAA. In terms of domain architecture, ACT spans 65–140; sequence AVVFSLKNEV…TIVTLNPPEN (76 aa). Histidine 318, histidine 323, and glutamate 363 together coordinate Fe cation.

The protein belongs to the biopterin-dependent aromatic amino acid hydroxylase family. In terms of assembly, interacts with DNAJC12. It depends on Fe(2+) as a cofactor. Brain specific.

The enzyme catalyses (6R)-L-erythro-5,6,7,8-tetrahydrobiopterin + L-tryptophan + O2 = 5-hydroxy-L-tryptophan + (4aS,6R)-4a-hydroxy-L-erythro-5,6,7,8-tetrahydrobiopterin. Its pathway is aromatic compound metabolism; serotonin biosynthesis; serotonin from L-tryptophan: step 1/2. This is Tryptophan 5-hydroxylase 2 (TPH2) from Homo sapiens (Human).